We begin with the raw amino-acid sequence, 688 residues long: MIDRYKHQQLRIGPVSPQQISAWANKILPNGEIVGEVTKPYTFHYKTNKPEKDGLFCERISGPIKSGICACGNYRVIGDEKEDPNFCEQCGVEFADSRARRYQMGYIKLTCPVTHVWYLKRLPSYIANLLDKPLKELEGLVYCDFSFARPVAKKPTFLRLRGLFEYEIQSRKYSIPLFFTTQGFDTFRNREISTGASAIREQLADLDLRIIIDRSLVEWKELGEEGSTGNEWEDRKIGRRKDFLVRRIELAKHFIRTNVEPERMVLSLLPVLPPELRPIIQIDGGKPMSSDINELYRRVIYRNNTLTDLLTTSRSTPGELVMCQEKLVQEAVDTLLDNGIRGQPMRDGYNKVYKSFSDVIEGKEGRFRETLLGKRVDYSGRSVIVVGPSLSLHRCGLPREIAIELFQTFLIRGLIRQRVASNIGIAKSKIREKEPIVWEILQEIMRGHPVLLNRAPTLHRLGIQAFQPILVEGRAICLHPLVCKGFNADFDGDQMAVHVPLSLEAQAEARLLMFSHMNLLSPAIGSPISVPTQDMLIGLYVLTIGNRQGVCANRYNPWNRRNYQNETVDHTKYDRTNYRYTKEKEPYFCSSYDALGAYRQKRIHLDTPLWLRWRLDQRIISLREVPIEVQYESLGTYHEIYRPYLIVKSVKKEILCIYIRTTVGHISFYREIEEAIQGFCRAYSYDGT.

Zn(2+)-binding residues include cysteine 69, cysteine 71, cysteine 87, and cysteine 90. Aspartate 489, aspartate 491, and aspartate 493 together coordinate Mg(2+).

It belongs to the RNA polymerase beta' chain family. RpoC1 subfamily. In plastids the minimal PEP RNA polymerase catalytic core is composed of four subunits: alpha, beta, beta', and beta''. When a (nuclear-encoded) sigma factor is associated with the core the holoenzyme is formed, which can initiate transcription. Mg(2+) serves as cofactor. Zn(2+) is required as a cofactor.

The protein localises to the plastid. The protein resides in the chloroplast. It carries out the reaction RNA(n) + a ribonucleoside 5'-triphosphate = RNA(n+1) + diphosphate. Its function is as follows. DNA-dependent RNA polymerase catalyzes the transcription of DNA into RNA using the four ribonucleoside triphosphates as substrates. This chain is DNA-directed RNA polymerase subunit beta', found in Piper cenocladum (Ant piper).